Here is a 230-residue protein sequence, read N- to C-terminus: Phosducin-like protein 1 (230 aa).

Methionine 1 is modified (N-acetylmethionine). A Phosducin domain is found at alanine 16–lysine 166. The stretch at aspartate 25–aspartate 79 forms a coiled coil. Residues tyrosine 81–isoleucine 230 are thioredoxin fold.

This sequence belongs to the phosducin family. In terms of assembly, interacts with the G protein beta-gamma subunit complex (STE4-STE18 complex).

It localises to the cytoplasm. In terms of biological role, not essential for growth. Inhibits early G-protein signaling events following pheromone stimulation. May help create heterodimerizable beta-tubulin by facilitating the efficient transfer of nascent beta-tubulin polypeptides to the folding apparatus. This is Phosducin-like protein 1 (PLP1) from Saccharomyces cerevisiae (strain ATCC 204508 / S288c) (Baker's yeast).